Here is a 319-residue protein sequence, read N- to C-terminus: Cell division protein FtsQ (319 aa).

The interval 1-53 is disordered; that stretch reads MDSREDMVPDVLLEAPNPRRRQSADTSTERPTRPARREQGYARVTPRGERMGN. Topologically, residues 1 to 70 are cytoplasmic; sequence MDSREDMVPD…PDFFAWFDPR (70 aa). A compositionally biased stretch (basic and acidic residues) spans 27–52; that stretch reads STERPTRPARREQGYARVTPRGERMG. Residues 71–87 form a helical membrane-spanning segment; it reads WLWVPLMVCLAVGGYWA. The Periplasmic portion of the chain corresponds to 88–319; the sequence is YEPLEKLLER…NATRNAPTHP (232 aa). The POTRA domain maps to 97–166; that stretch reads RPFKSVVVEG…DTLVVKIAEQ (70 aa).

It belongs to the FtsQ/DivIB family. FtsQ subfamily. As to quaternary structure, part of a complex composed of FtsB, FtsL and FtsQ.

The protein resides in the cell inner membrane. In terms of biological role, essential cell division protein. May link together the upstream cell division proteins, which are predominantly cytoplasmic, with the downstream cell division proteins, which are predominantly periplasmic. May control correct divisome assembly. The sequence is that of Cell division protein FtsQ from Cellvibrio japonicus (strain Ueda107) (Pseudomonas fluorescens subsp. cellulosa).